Consider the following 247-residue polypeptide: 2,3-bisphosphoglycerate-dependent phosphoglycerate mutase (247 aa).

Residues 8–15 (RHGESQWN), 21–22 (TG), Arg60, 87–90 (ERHY), Lys98, 114–115 (RR), and 183–184 (GN) each bind substrate. His9 (tele-phosphohistidine intermediate) is an active-site residue. The active-site Proton donor/acceptor is Glu87.

This sequence belongs to the phosphoglycerate mutase family. BPG-dependent PGAM subfamily.

It catalyses the reaction (2R)-2-phosphoglycerate = (2R)-3-phosphoglycerate. It participates in carbohydrate degradation; glycolysis; pyruvate from D-glyceraldehyde 3-phosphate: step 3/5. Its function is as follows. Catalyzes the interconversion of 2-phosphoglycerate and 3-phosphoglycerate. In Prosthecochloris aestuarii (strain DSM 271 / SK 413), this protein is 2,3-bisphosphoglycerate-dependent phosphoglycerate mutase.